A 256-amino-acid polypeptide reads, in one-letter code: Fat body protein 2 (256 aa).

10–34 (VYVGSFSGIGWQMMMQLMQKDIKMM) serves as a coordination point for NAD(+). A substrate-binding site is contributed by Ser-138. The Proton acceptor role is filled by Tyr-151.

It belongs to the short-chain dehydrogenases/reductases (SDR) family.

This chain is Fat body protein 2 (Fbp2), found in Drosophila melanogaster (Fruit fly).